Consider the following 90-residue polypeptide: Probable Fe(2+)-trafficking protein (90 aa).

The protein belongs to the Fe(2+)-trafficking protein family.

Functionally, could be a mediator in iron transactions between iron acquisition and iron-requiring processes, such as synthesis and/or repair of Fe-S clusters in biosynthetic enzymes. The sequence is that of Probable Fe(2+)-trafficking protein from Herminiimonas arsenicoxydans.